Reading from the N-terminus, the 230-residue chain is Cyclin-U2-2 (230 aa).

Belongs to the cyclin family. Cyclin U/P subfamily. Interacts with CDKA-1. Expressed in roots and stems. Expressed in the shoot apex, leaf primordia and young leaves.

In Arabidopsis thaliana (Mouse-ear cress), this protein is Cyclin-U2-2 (CYCU2-2).